A 459-amino-acid chain; its full sequence is Cysteine--tRNA ligase (459 aa).

Cysteine 28 is a Zn(2+) binding site. A 'HIGH' region motif is present at residues 30 to 40 (VTIYDLCHIGH). Residues cysteine 209, histidine 234, and glutamate 238 each coordinate Zn(2+). The 'KMSKS' region motif lies at 266–270 (KMSKS). ATP is bound at residue lysine 269.

This sequence belongs to the class-I aminoacyl-tRNA synthetase family. As to quaternary structure, monomer. The cofactor is Zn(2+).

It localises to the cytoplasm. It carries out the reaction tRNA(Cys) + L-cysteine + ATP = L-cysteinyl-tRNA(Cys) + AMP + diphosphate. The protein is Cysteine--tRNA ligase of Shewanella baltica (strain OS155 / ATCC BAA-1091).